We begin with the raw amino-acid sequence, 1585 residues long: Histone acetyltransferase lsy-12 (1585 aa).

Disordered stretches follow at residues 1–37 and 279–491; these read MGKK…ARRE and GPQH…DDPV. Over residues 23–37 the composition is skewed to basic and acidic residues; it reads PKDRTARPTAAARRE. Residues 279 to 296 are compositionally biased toward polar residues; the sequence is GPQHENVTVSENVLSTES. Basic and acidic residues predominate over residues 302-312; that stretch reads TETKRLHDSSR. Polar residues-rich tracts occupy residues 355–364 and 411–426; these read LLSNPHSTPV and SRLS…SNDL. The span at 431–440 shows a compositional bias: low complexity; sequence SAPSSSSAAS. The span at 453-469 shows a compositional bias: basic residues; that stretch reads QQRRKGNQSAARSRKIK. Residues 477–491 show a composition bias toward acidic residues; it reads QEDEPMELDSDDDPV. The region spanning 544-830 is the MYST-type HAT domain; sequence EQARLPERIH…YDPECLDWVP (287 aa). The C2HC MYST-type zinc-finger motif lies at 577 to 602; that stretch reads LFICEFCFFYARSDEIMQNHAKKCML. At K644 the chain carries N6-acetyllysine; by autocatalysis. Position 685–689 (685–689) interacts with acetyl-CoA; sequence SCIMT. E720 (proton donor/acceptor) is an active-site residue. The acetyl-CoA site is built by S724 and K815. Composition is skewed to basic and acidic residues over residues 844–855 and 947–956; these read SKEEIEQDEQRR and VLDKSNIREE. Disordered regions lie at residues 844-903, 927-1262, 1286-1373, and 1431-1507; these read SKEE…LKHE, EENK…IGKS, ESTA…ASNH, and HHQF…VHPQ. Polar residues predominate over residues 977-999; that stretch reads NKCNNTESEPNPSGRKTSATSSG. The segment covering 1011 to 1022 has biased composition (acidic residues); that stretch reads TEEEEEDDDPTD. Residues 1029–1046 are compositionally biased toward basic and acidic residues; that stretch reads DDEKPFETSVNKEKNEKS. The span at 1047 to 1060 shows a compositional bias: basic residues; that stretch reads RRGKKVSKKRRSVA. Basic and acidic residues-rich tracts occupy residues 1070–1081 and 1135–1151; these read VRDRDEPKKAEN and DIPK…AYDR. Positions 1164–1173 are enriched in low complexity; it reads PTPDSYHSSP. Over residues 1185 to 1194 the composition is skewed to polar residues; it reads LMQAQQNIYQ. Positions 1196 to 1207 are enriched in basic and acidic residues; the sequence is NDCHFAENDSKP. 2 stretches are compositionally biased toward polar residues: residues 1298-1317 and 1324-1333; these read AGPS…NTTP and HPNSQQQATP. A compositionally biased stretch (low complexity) spans 1482 to 1493; the sequence is QHQQQQPQQPQQ.

This sequence belongs to the MYST (SAS/MOZ) family.

It catalyses the reaction L-lysyl-[protein] + acetyl-CoA = N(6)-acetyl-L-lysyl-[protein] + CoA + H(+). Functionally, probable histone acetyltransferase. Required to initiate and then maintain lateralized gene expression in the ASE sensory neurons. Involved in determining cell fate in the ASE neurons. The chain is Histone acetyltransferase lsy-12 from Caenorhabditis elegans.